The chain runs to 366 residues: Aminomethyltransferase (366 aa).

It belongs to the GcvT family. In terms of assembly, the glycine cleavage system is composed of four proteins: P, T, L and H.

It carries out the reaction N(6)-[(R)-S(8)-aminomethyldihydrolipoyl]-L-lysyl-[protein] + (6S)-5,6,7,8-tetrahydrofolate = N(6)-[(R)-dihydrolipoyl]-L-lysyl-[protein] + (6R)-5,10-methylene-5,6,7,8-tetrahydrofolate + NH4(+). Functionally, the glycine cleavage system catalyzes the degradation of glycine. The chain is Aminomethyltransferase from Bacillus cereus (strain 03BB102).